The primary structure comprises 130 residues: Ribonuclease P protein component 2 (130 aa).

The protein belongs to the eukaryotic/archaeal RNase P protein component 2 family. In terms of assembly, consists of a catalytic RNA component and at least 4-5 protein subunits.

The protein localises to the cytoplasm. It catalyses the reaction Endonucleolytic cleavage of RNA, removing 5'-extranucleotides from tRNA precursor.. Its function is as follows. Part of ribonuclease P, a protein complex that generates mature tRNA molecules by cleaving their 5'-ends. In Methanococcus maripaludis (strain C5 / ATCC BAA-1333), this protein is Ribonuclease P protein component 2.